The following is a 430-amino-acid chain: Resistance to inhibitors of cholinesterase protein 19 (430 aa).

An AH domain is found at 56-260 (ASDNELDTCL…TSRAFETLAE (205 aa)). The interval 279 to 342 (GTKPERERKS…SPLIEDVDDE (64 aa)) is disordered. Residues 281–294 (KPERERKSEKEESA) show a composition bias toward basic and acidic residues.

In terms of assembly, interacts with the GTPase activator protein tbc-8; the interaction is direct and may be required for the activation of rab-2 and dense vesicle maturation in cholinergic motoneurons. Interacts with rund-1. As to expression, expressed in all neurons. Highly expressed in m2 pharyngeal neurons and some pharyngeal interneurons. Also expressed in the excretory canal and the gland cells located just below the nerve ring in the head.

It is found in the cytoplasm. The protein localises to the cytoplasmic vesicle membrane. May be involved in neurotransmitter secretion. In association with the GTPase activator protein tbc-8 activates rab-2 during dense core vesicle maturation in cholinergic motoneurons. In Caenorhabditis elegans, this protein is Resistance to inhibitors of cholinesterase protein 19.